The chain runs to 426 residues: Serine--tRNA ligase (426 aa).

L-serine is bound at residue 235 to 237 (TAE). 266–268 (RRE) is an ATP binding site. Glu-289 lines the L-serine pocket. 353-356 (EISS) contacts ATP. Residue Ser-389 participates in L-serine binding.

This sequence belongs to the class-II aminoacyl-tRNA synthetase family. Type-1 seryl-tRNA synthetase subfamily. In terms of assembly, homodimer. The tRNA molecule binds across the dimer.

The protein localises to the cytoplasm. The catalysed reaction is tRNA(Ser) + L-serine + ATP = L-seryl-tRNA(Ser) + AMP + diphosphate + H(+). It catalyses the reaction tRNA(Sec) + L-serine + ATP = L-seryl-tRNA(Sec) + AMP + diphosphate + H(+). It functions in the pathway aminoacyl-tRNA biosynthesis; selenocysteinyl-tRNA(Sec) biosynthesis; L-seryl-tRNA(Sec) from L-serine and tRNA(Sec): step 1/1. Functionally, catalyzes the attachment of serine to tRNA(Ser). Is also able to aminoacylate tRNA(Sec) with serine, to form the misacylated tRNA L-seryl-tRNA(Sec), which will be further converted into selenocysteinyl-tRNA(Sec). The protein is Serine--tRNA ligase of Nostoc sp. (strain PCC 7120 / SAG 25.82 / UTEX 2576).